Reading from the N-terminus, the 64-residue chain is Antimicrobial peptide THP2 (64 aa).

The first 28 residues, 1–28 (MRILYLLFSLLFLALQVSPGLSSPKRDM), serve as a signal peptide directing secretion. Disulfide bonds link C31/C57, C36/C51, and C41/C58.

As to expression, expressed in circulating heterophil granulocytes and bone marrow (at protein level).

The protein localises to the secreted. In terms of biological role, antibacterial activity against the Gram-positive bacterium Staphylococcus aureus. Lacks antibacterial activity against the Gram-negative bacterium E.coli K-12. The chain is Antimicrobial peptide THP2 from Meleagris gallopavo (Wild turkey).